The sequence spans 64 residues: Small, acid-soluble spore protein D (64 aa).

This sequence belongs to the alpha/beta-type SASP family.

Functionally, SASP are bound to spore DNA. They are double-stranded DNA-binding proteins that cause DNA to change to an a-like conformation. They protect the DNA backbone from chemical and enzymatic cleavage and are thus involved in dormant spore's high resistance to UV light. The polypeptide is Small, acid-soluble spore protein D (sspD) (Bacillus subtilis (strain 168)).